The chain runs to 87 residues: Small ribosomal subunit protein bS18 (87 aa).

The segment covering 1–10 has biased composition (basic and acidic residues); it reads MAGKSSGDRR. The segment at 1–23 is disordered; it reads MAGKSSGDRRKLLRGAKVGKNAA.

It belongs to the bacterial ribosomal protein bS18 family. In terms of assembly, part of the 30S ribosomal subunit. Forms a tight heterodimer with protein bS6.

Binds as a heterodimer with protein bS6 to the central domain of the 16S rRNA, where it helps stabilize the platform of the 30S subunit. The chain is Small ribosomal subunit protein bS18 from Clavibacter sepedonicus (Clavibacter michiganensis subsp. sepedonicus).